We begin with the raw amino-acid sequence, 89 residues long: Small ribosomal subunit protein uS15 (89 aa).

It belongs to the universal ribosomal protein uS15 family. Part of the 30S ribosomal subunit. Forms a bridge to the 50S subunit in the 70S ribosome, contacting the 23S rRNA.

One of the primary rRNA binding proteins, it binds directly to 16S rRNA where it helps nucleate assembly of the platform of the 30S subunit by binding and bridging several RNA helices of the 16S rRNA. Its function is as follows. Forms an intersubunit bridge (bridge B4) with the 23S rRNA of the 50S subunit in the ribosome. The protein is Small ribosomal subunit protein uS15 of Exiguobacterium sp. (strain ATCC BAA-1283 / AT1b).